Reading from the N-terminus, the 333-residue chain is MEINIREDAFIVEINILKCHGTGNDFILIDEYNNNYNLDDETRRDIAIQACNRAKFIGGDGILFVQKSDICDAKMRIFNADGSEAEMCGNGLRCVGRYVIEMLNKESVEIETLKSKYWVKLQEDIYEGVKTVKIDIKSVSLDVKTLPLNYKKEKLIFDKIPELSDEFDFTAVSITNPHLIAIVNNIDSDKLVEIGKKGNSTKSVLPQGVNVSFVKVIDSSNIYVKTYERGVGLTKSCGTAMTASSIVSCIGEKVQFDNAINVYNDGGAIKTIVHKDSNGNYSVDFIGNATFIFEGTMELDKRKIEQFTIDESKFEKETNSYNEFFEYTRKNCK.

Residues asparagine 24 and asparagine 79 each coordinate substrate. Cysteine 88 functions as the Proton donor in the catalytic mechanism. Substrate is bound by residues 89 to 90 (GN), asparagine 176, asparagine 210, and 228 to 229 (ER). Residue cysteine 237 is the Proton acceptor of the active site. Residue 238 to 239 (GT) coordinates substrate.

This sequence belongs to the diaminopimelate epimerase family. In terms of assembly, homodimer.

The protein resides in the cytoplasm. The enzyme catalyses (2S,6S)-2,6-diaminopimelate = meso-2,6-diaminopimelate. It functions in the pathway amino-acid biosynthesis; L-lysine biosynthesis via DAP pathway; DL-2,6-diaminopimelate from LL-2,6-diaminopimelate: step 1/1. Catalyzes the stereoinversion of LL-2,6-diaminopimelate (L,L-DAP) to meso-diaminopimelate (meso-DAP), a precursor of L-lysine and an essential component of the bacterial peptidoglycan. This chain is Diaminopimelate epimerase, found in Clostridium acetobutylicum (strain ATCC 824 / DSM 792 / JCM 1419 / IAM 19013 / LMG 5710 / NBRC 13948 / NRRL B-527 / VKM B-1787 / 2291 / W).